Consider the following 47-residue polypeptide: Accessory gland peptide Acp33A (47 aa).

A signal peptide spans 1-21 (MLPSKRVPFLFTIILFLAGLG).

Main cells of accessory gland and seminal fluid.

It localises to the secreted. Responsible for physiological and behavioral changes in mated female flies. The chain is Accessory gland peptide Acp33A (Acp33A) from Drosophila melanogaster (Fruit fly).